Here is a 78-residue protein sequence, read N- to C-terminus: UPF0335 protein A1C_00850 (78 aa).

The protein belongs to the UPF0335 family.

This chain is UPF0335 protein A1C_00850, found in Rickettsia akari (strain Hartford).